Reading from the N-terminus, the 938-residue chain is MSDYKSTLNLPETGFPMRGDLAKREPGMLARWTDDDLYGIIRAAKKGKKTFILHDGPPYANGSIHIGHSVNKILKDIIIKSKGLSGYDSPYVPGWDCHGLPIELKVEQEYGKPGEKFTAAEFRAKCREYAATQVDGQRKDFIRLGVLGDWSHPYLTMDFKTEANIIRALGKIIGNGHLHKGAKPVHWCVDCRSALAEAEVEYYDKTSPSIDVAFQAVDQDALKTKFGVSNVNGPISLVIWTTTPWTLPANRAISIAPDFDYALVQIDGQAVILAKDLVESVMQRIGVSDYTILGTVKGAELELLRFTHPFMDFDVPAILGDHVTLDAGTGAVHTAPGHGPDDYVIGQKYGLETANPVGPDGTYLPGTYPTLDGVNVFKANDIVIALLQEKGALLHVEKMQHSYPCCWRHKTPIIFRATPQWFVSMDQKGLRAQSLKEIKGVQWIPDWGQARIESMVANRPDWCISRQRTWGVPMSLFVHKDTEELHPRTLELMEEVAKRVEVDGIQAWWDLDAKEILGDEADQYVKVPDTLDVWFDSGSTHSSVVDVRPEFAGHAADMYLEGSDQHRGWFMSSLMISTAMKGKAPYRQVLTHGFTVDGQGRKMSKSIGNTVSPQDVMNKLGADILRLWVASTDYTGEMAVSDEILKRAADSYRRIRNTARFLLANLNGFDPAKDMVKPEEMVVLDRWAVGCAKAAQEDILKAYEAYDFHEVVQRLMRFCSVEMGSFYLDIIKDRQYTAKADSVARRSCQTALYHIAEALVRWMAPILSFTADEVWGYLPGEREKYVFTGEWYEGLFGLADSEAMNDAFWDELLKVRGEVNKVIEQARADKNVGGSLEAAVTLYAEPELAAKLTALGDELRFVLLTSGATVADYNDAPADAQQSEVLKGLKVALSKAEGEKCPRCWHYTQDVGKVAEHAEICGRCVSNVAGDGEKRKFA.

The 'HIGH' region motif lies at 58–68; sequence PYANGSIHIGH. The residue at position 183 (lysine 183) is an N6-acetyllysine. Glutamate 561 contributes to the L-isoleucyl-5'-AMP binding site. The 'KMSKS' region motif lies at 602–606; that stretch reads KMSKS. Lysine 605 lines the ATP pocket. Residues cysteine 901, cysteine 904, cysteine 921, and cysteine 924 each contribute to the Zn(2+) site.

The protein belongs to the class-I aminoacyl-tRNA synthetase family. IleS type 1 subfamily. Monomer. The cofactor is Zn(2+).

It is found in the cytoplasm. The enzyme catalyses tRNA(Ile) + L-isoleucine + ATP = L-isoleucyl-tRNA(Ile) + AMP + diphosphate. Its function is as follows. Catalyzes the attachment of isoleucine to tRNA(Ile). As IleRS can inadvertently accommodate and process structurally similar amino acids such as valine, to avoid such errors it has two additional distinct tRNA(Ile)-dependent editing activities. One activity is designated as 'pretransfer' editing and involves the hydrolysis of activated Val-AMP. The other activity is designated 'posttransfer' editing and involves deacylation of mischarged Val-tRNA(Ile). In Escherichia coli O6:K15:H31 (strain 536 / UPEC), this protein is Isoleucine--tRNA ligase.